The sequence spans 518 residues: Crotonobetaine/carnitine--CoA ligase (518 aa).

It belongs to the ATP-dependent AMP-binding enzyme family.

The catalysed reaction is 4-(trimethylamino)butanoate + ATP + CoA = 4-(trimethylamino)butanoyl-CoA + AMP + diphosphate. The enzyme catalyses crotonobetaine + ATP + CoA = crotonobetainyl-CoA + AMP + diphosphate. It carries out the reaction (R)-carnitine + ATP + CoA = (R)-carnitinyl-CoA + AMP + diphosphate. Its pathway is amine and polyamine metabolism; carnitine metabolism. Its function is as follows. Catalyzes the transfer of CoA to carnitine, generating the initial carnitinyl-CoA needed for the CaiB reaction cycle. Also has activity toward crotonobetaine and gamma-butyrobetaine. The sequence is that of Crotonobetaine/carnitine--CoA ligase from Proteus mirabilis (strain HI4320).